The following is a 232-amino-acid chain: MAVFALIPAAGMGKRMGASINKQYLLLGGMPILARTLEVFERSPLVDGIFVVIPADEIPFCREQVVERHGFSKVRSIVAGGAERQQSVLNGLRAMEGTAGEYDVILIHDGVRPFVTEDILGRATATARENDGALVAVPAKDTVKVVEDGIITATPSRETLWLAQTPQAFRYGVIRAAHEVADAERFLGTDDAMLVERLGRQVRIVLGDYRNVKITTPEDMVLAEAFIKEKLP.

This sequence belongs to the IspD/TarI cytidylyltransferase family. IspD subfamily.

The catalysed reaction is 2-C-methyl-D-erythritol 4-phosphate + CTP + H(+) = 4-CDP-2-C-methyl-D-erythritol + diphosphate. It participates in isoprenoid biosynthesis; isopentenyl diphosphate biosynthesis via DXP pathway; isopentenyl diphosphate from 1-deoxy-D-xylulose 5-phosphate: step 2/6. Functionally, catalyzes the formation of 4-diphosphocytidyl-2-C-methyl-D-erythritol from CTP and 2-C-methyl-D-erythritol 4-phosphate (MEP). In Geobacter metallireducens (strain ATCC 53774 / DSM 7210 / GS-15), this protein is 2-C-methyl-D-erythritol 4-phosphate cytidylyltransferase.